A 281-amino-acid chain; its full sequence is Release factor glutamine methyltransferase (281 aa).

S-adenosyl-L-methionine contacts are provided by residues 121–125 (GSGTG), Asp-144, and Asn-188. 188-191 (NPPY) is a substrate binding site.

The protein belongs to the protein N5-glutamine methyltransferase family. PrmC subfamily.

The enzyme catalyses L-glutaminyl-[peptide chain release factor] + S-adenosyl-L-methionine = N(5)-methyl-L-glutaminyl-[peptide chain release factor] + S-adenosyl-L-homocysteine + H(+). In terms of biological role, methylates the class 1 translation termination release factors RF1/PrfA and RF2/PrfB on the glutamine residue of the universally conserved GGQ motif. The protein is Release factor glutamine methyltransferase of Aquifex aeolicus (strain VF5).